The following is a 337-amino-acid chain: Inositol 2-dehydrogenase (337 aa).

It belongs to the Gfo/Idh/MocA family. Homotetramer.

It catalyses the reaction myo-inositol + NAD(+) = scyllo-inosose + NADH + H(+). In terms of biological role, involved in the oxidation of myo-inositol (MI) to 2-keto-myo-inositol (2KMI or 2-inosose). In Burkholderia ambifaria (strain MC40-6), this protein is Inositol 2-dehydrogenase.